The sequence spans 135 residues: ATP synthase epsilon chain (135 aa).

This sequence belongs to the ATPase epsilon chain family. As to quaternary structure, F-type ATPases have 2 components, CF(1) - the catalytic core - and CF(0) - the membrane proton channel. CF(1) has five subunits: alpha(3), beta(3), gamma(1), delta(1), epsilon(1). CF(0) has three main subunits: a, b and c.

The protein resides in the cell inner membrane. In terms of biological role, produces ATP from ADP in the presence of a proton gradient across the membrane. This is ATP synthase epsilon chain from Rhodopseudomonas palustris (strain BisA53).